The following is a 181-amino-acid chain: Oligoribonuclease (181 aa).

Residues 8–171 form the Exonuclease domain; that stretch reads LIWIDMEMTG…ADIYDSIEEL (164 aa). Tyrosine 129 is a catalytic residue.

This sequence belongs to the oligoribonuclease family.

The protein resides in the cytoplasm. 3'-to-5' exoribonuclease specific for small oligoribonucleotides. The polypeptide is Oligoribonuclease (Nitrosomonas europaea (strain ATCC 19718 / CIP 103999 / KCTC 2705 / NBRC 14298)).